A 578-amino-acid polypeptide reads, in one-letter code: MKASRFFIGTLKEAPADAEIVSHKLMVRAGMIRRVAGGIYNYLPIGLRSIRKVEAIVREEMNRAGALELLMPAVQPAELWQESGRWEQYGPELLRFKDRKDNDFVIGPTHEEVITDIARNQIKSYRQMPVNFYQIQTKFRDEIRPRFGVMRGREFLMKDAYSFDKDAAGLNESYRKMYDAYVRIFTRLGLEFRAVAADSGSIGGNFSHEFHVIADTGEDAIAYCPTSEFAANIEAAEALPLIAERAAPAQAMEKVATPGKAKCEAVAELLAIPLERTIKSIVLATDNEGAEPTIWLVMLRGDHDLNEIKVSKLPGLKNHRFATEQEIVEWFGTPPGYLGPVGTKKPVKVIADRTVANMSDFVVGANEVDYHIAGVNWGRDLPEPDVADVRNVKKGDPSPDGKGVIDICRGIEVGHVFQLGTKYSEAMGATFLDESGKPQPMLMGCYGVGVTRILGAAIEQNFDDKGIIWPESIAPFELVLCPMGYDRSEMVREAADKLYAELTAAGVDVILDDRGERPGVMFADWELIGVPHRLVIGERGLKDGKVEYQGRRDAEATLLPADAAAATVTEKIRAALAH.

Belongs to the class-II aminoacyl-tRNA synthetase family. ProS type 1 subfamily. Homodimer.

It is found in the cytoplasm. The enzyme catalyses tRNA(Pro) + L-proline + ATP = L-prolyl-tRNA(Pro) + AMP + diphosphate. Catalyzes the attachment of proline to tRNA(Pro) in a two-step reaction: proline is first activated by ATP to form Pro-AMP and then transferred to the acceptor end of tRNA(Pro). As ProRS can inadvertently accommodate and process non-cognate amino acids such as alanine and cysteine, to avoid such errors it has two additional distinct editing activities against alanine. One activity is designated as 'pretransfer' editing and involves the tRNA(Pro)-independent hydrolysis of activated Ala-AMP. The other activity is designated 'posttransfer' editing and involves deacylation of mischarged Ala-tRNA(Pro). The misacylated Cys-tRNA(Pro) is not edited by ProRS. This Burkholderia vietnamiensis (strain G4 / LMG 22486) (Burkholderia cepacia (strain R1808)) protein is Proline--tRNA ligase.